Here is a 137-residue protein sequence, read N- to C-terminus: Nucleoside diphosphate kinase (137 aa).

Residues Lys-10, Phe-59, Arg-87, Thr-93, Arg-104, and Asn-114 each contribute to the ATP site. Residue His-117 is the Pros-phosphohistidine intermediate of the active site.

Belongs to the NDK family. Homotetramer. Mg(2+) serves as cofactor.

Its subcellular location is the cytoplasm. The catalysed reaction is a 2'-deoxyribonucleoside 5'-diphosphate + ATP = a 2'-deoxyribonucleoside 5'-triphosphate + ADP. It catalyses the reaction a ribonucleoside 5'-diphosphate + ATP = a ribonucleoside 5'-triphosphate + ADP. Its function is as follows. Major role in the synthesis of nucleoside triphosphates other than ATP. The ATP gamma phosphate is transferred to the NDP beta phosphate via a ping-pong mechanism, using a phosphorylated active-site intermediate. This Streptomyces coelicolor (strain ATCC BAA-471 / A3(2) / M145) protein is Nucleoside diphosphate kinase.